The following is a 574-amino-acid chain: Efflux pump FUB11 (574 aa).

A disordered region spans residues 1-44; that stretch reads MAIDPQPSSPSLSSETIANDTIGNDNNVNEPSVEPKTQEHQHTV. Over residues 9–30 the composition is skewed to polar residues; it reads SPSLSSETIANDTIGNDNNVNE. The N-linked (GlcNAc...) asparagine glycan is linked to Asn-19. Helical transmembrane passes span 116–136, 148–168, 176–196, 208–228, 235–255, 318–338, 348–368, 394–414, 419–439, 449–469, and 484–504; these read VATL…LIWA, FFFT…AGSI, FLTG…IADM, MFSG…GFLG, WLHG…TVFI, IYIS…PIVF, IGGL…ISFA, AIMG…TTFA, IVPI…FMAL, IFAA…GAAF, and WASS…FLFY. Positions 552–574 are disordered; it reads HNSHTSATHSHGHRRSLSCTRSV.

This sequence belongs to the major facilitator superfamily. DHA1 family. Polyamines/proton antiporter (TC 2.A.1.2.16) subfamily.

It is found in the cell membrane. Its function is as follows. Efflux pump involved in export of fusaric acid, a mycotoxin with low to moderate toxicity to animals and humans, but with high phytotoxic properties. Constitutes a self-protecting mechanism of the fungus against critical levels of fusaric acid within the cell. The sequence is that of Efflux pump FUB11 from Gibberella fujikuroi (strain CBS 195.34 / IMI 58289 / NRRL A-6831) (Bakanae and foot rot disease fungus).